The primary structure comprises 121 residues: Large ribosomal subunit protein uL14 (121 aa).

This sequence belongs to the universal ribosomal protein uL14 family. In terms of assembly, part of the 50S ribosomal subunit. Forms a cluster with proteins L3 and L19. In the 70S ribosome, L14 and L19 interact and together make contacts with the 16S rRNA in bridges B5 and B8.

Functionally, binds to 23S rRNA. Forms part of two intersubunit bridges in the 70S ribosome. The sequence is that of Large ribosomal subunit protein uL14 from Hydrogenobaculum sp. (strain Y04AAS1).